Here is a 2623-residue protein sequence, read N- to C-terminus: Immunoglobulin superfamily member 10 (2623 aa).

Residues 1–28 form the signal peptide; the sequence is MKVKGRGITCLLVSFAVICLVATPGGKA. The LRRNT domain maps to 29–56; sequence CPRRCACYMPTEVHCTFRYLTSIPDSIP. 6 LRR repeats span residues 58 to 79, 82 to 103, 106 to 127, 130 to 151, 154 to 175, and 186 to 207; these read NVER…DFSG, KLEL…TFSD, ALQV…TFYG, SLTR…VFYG, FLRL…TFVS, and FIKF…MVSY. The LRRCT domain occupies 219-281; it reads NPWTCDCHLK…VSAAAFQCAK (63 aa). Asn319 and Asn439 each carry an N-linked (GlcNAc...) asparagine glycan. 2 Ig-like C2-type domains span residues 461 to 567 and 571 to 661; these read PRAE…YRIT and PLVE…FQVS. 2 cysteine pairs are disulfide-bonded: Cys497–Cys551 and Cys595–Cys645. Asn627 carries an N-linked (GlcNAc...) asparagine glycan. 2 disordered regions span residues 668-692 and 767-788; these read RPLE…HLKE and AMPD…QLPN. N-linked (GlcNAc...) asparagine glycans are attached at residues Asn774 and Asn999. 2 disordered regions span residues 1334–1376 and 1434–1453; these read TQTE…AMTP and STIA…TTTR. The span at 1335–1356 shows a compositional bias: basic and acidic residues; that stretch reads QTERSRAQTIQREQEPQKKNRT. Over residues 1357–1373 the composition is skewed to polar residues; it reads DPNISPDQSSGFTTPTA. Ig-like C2-type domains are found at residues 1648–1739, 1745–1836, 1841–1933, 1941–2034, 2037–2135, 2141–2229, 2234–2331, 2337–2427, 2432–2518, and 2528–2623; these read PRIV…VTLS, PRIL…VKIQ, PPVI…VMLT, PRIE…VSLR, PAKI…VHLT, PRIR…YKLD, PPLI…LEVL, PTFR…VILE, PVIL…TLIT, and PRIT…IQVI. Disulfide bonds link Cys1670–Cys1723, Cys1767–Cys1820, and Cys1864–Cys1917. 2 N-linked (GlcNAc...) asparagine glycosylation sites follow: Asn1899 and Asn1962. Intrachain disulfides connect Cys1963–Cys2016, Cys2060–Cys2119, Cys2163–Cys2213, Cys2261–Cys2313, Cys2359–Cys2411, Cys2454–Cys2506, and Cys2550–Cys2605. A glycan (N-linked (GlcNAc...) asparagine) is linked at Asn2101. Tyr2603 carries the phosphotyrosine modification.

The protein localises to the secreted. Involved in the control of early migration of neurons expressing gonadotropin-releasing hormone (GNRH neurons). May be involved in the maintenance of osteochondroprogenitor cells pool. The protein is Immunoglobulin superfamily member 10 (IGSF10) of Homo sapiens (Human).